The primary structure comprises 319 residues: Olfactory receptor 5B21 (319 aa).

Residues 1 to 26 (MTSMENITEVTEFILLGLTDDPNLQV) lie on the Extracellular side of the membrane. Asparagine 6 carries N-linked (GlcNAc...) asparagine glycosylation. The helical transmembrane segment at 27 to 47 (PLLLIFLFIYLVTLIGNGGMM) threads the bilayer. Over 48–55 (VIIFSDSH) the chain is Cytoplasmic. A helical transmembrane segment spans residues 56 to 76 (LHTPMYFFLSNLSFVDLGYSS). At 77-100 (AVAPKMVAALQSGNKVISYNGCAA) the chain is on the extracellular side. Cysteine 98 and cysteine 190 are oxidised to a cystine. A helical transmembrane segment spans residues 101–121 (QFFFFVGFATVECYLLASMAY). Over 122 to 134 (DRHAAVCRPLHYT) the chain is Cytoplasmic. Residues 135–155 (TTMTTGVCTILTIGSYTCGFL) traverse the membrane as a helical segment. The Extracellular segment spans residues 156–197 (NASIHAADTFKLSFCGSNKINHFFCDIPPLLALACSSTHISK). Residues 198–218 (LVVFFVVGFNVFFTLLVIIIS) traverse the membrane as a helical segment. The Cytoplasmic segment spans residues 219–238 (YFFIYIAIQNMKSSEGRKKA). Residues 239-259 (FSTCASHLTAVSIFYGTIIFM) traverse the membrane as a helical segment. The Extracellular segment spans residues 260–272 (YLQPSSGQSMDTD). The chain crosses the membrane as a helical span at residues 273 to 293 (KIASVFYTVVIPMLNPLIYSL). Over 294–319 (RNREVKSALWKILNRFYPASFSVSRK) the chain is Cytoplasmic.

Belongs to the G-protein coupled receptor 1 family.

The protein resides in the cell membrane. Functionally, odorant receptor. The sequence is that of Olfactory receptor 5B21 from Mus musculus (Mouse).